Reading from the N-terminus, the 357-residue chain is Peptide chain release factor 1 (357 aa).

Glutamine 233 bears the N5-methylglutamine mark.

It belongs to the prokaryotic/mitochondrial release factor family. Post-translationally, methylated by PrmC. Methylation increases the termination efficiency of RF1.

Its subcellular location is the cytoplasm. Functionally, peptide chain release factor 1 directs the termination of translation in response to the peptide chain termination codons UAG and UAA. This chain is Peptide chain release factor 1, found in Flavobacterium psychrophilum (strain ATCC 49511 / DSM 21280 / CIP 103535 / JIP02/86).